We begin with the raw amino-acid sequence, 156 residues long: Small ribosomal subunit protein uS7 (156 aa).

Belongs to the universal ribosomal protein uS7 family. As to quaternary structure, part of the 30S ribosomal subunit. Contacts proteins S9 and S11.

One of the primary rRNA binding proteins, it binds directly to 16S rRNA where it nucleates assembly of the head domain of the 30S subunit. Is located at the subunit interface close to the decoding center, probably blocks exit of the E-site tRNA. This Shewanella piezotolerans (strain WP3 / JCM 13877) protein is Small ribosomal subunit protein uS7.